We begin with the raw amino-acid sequence, 250 residues long: MSKEKQAQSKAHKAQQAISSAKSLSTQKSKMSELERATRDGAAIGKKRADIAKKIADKAKQLSSYQAKQFKADEQAVKKVAQEQKRLSDERTKHEAFIKQSLSSMRTTASATMEAEEEYDFFISHASEDKEAFVQDLVAALRDLGAKIFYDAYTLKVGDSLRRKIDQGLANSKFGIVVLSEHFFSKQWPARELDGLTAMEIGGQTRILPIWHKVSYDEVRRFSPSLADKVALNTSLKSVEEIAKELHSLI.

The segment at 1 to 46 (MSKEKQAQSKAHKAQQAISSAKSLSTQKSKMSELERATRDGAAIGK) is disordered. Residues 1-117 (MSKEKQAQSK…TASATMEAEE (117 aa)) are necessary and sufficient for phosphoinositide binding. Residues 14 to 23 (AQQAISSAKS) are compositionally biased toward low complexity. Residues 30-39 (KMSELERATR) show a composition bias toward basic and acidic residues. Positions 117-250 (EEYDFFISHA…EIAKELHSLI (134 aa)) constitute a TIR domain. Glu192 is an active-site residue.

As to quaternary structure, homodimer; may also form oligomers. Interacts with host TIRAP. Interacts with host MYD88. Interaction with host MYD88 was not confirmed by another study. Interacts with host TLR4. Abolishes the interaction of host TIRAP with TLR4.

The protein resides in the secreted. Its subcellular location is the host cell membrane. It catalyses the reaction NAD(+) + H2O = ADP-D-ribose + nicotinamide + H(+). The catalysed reaction is NAD(+) = 2'cADPR + nicotinamide + H(+). Functionally, virulence factor that interferes with host Toll-like receptor 2 (TLR2) and TLR4 signaling, resulting in the reduction of dendritic cell maturation, inhibition of pro-inflammatory cytokine secretion and impaired NF-kappa-B activation in macrophages. Interferes with host TLR4 signaling by abolishing host TLR4-TIRAP interaction (but not host TIRAP-MYD88 interaction) and its downstream signaling. Inhibits host TLR 2 induced NF-kappa-B activation and TNF (tumor necrosis factor) secretion. Binds phosphoinositide (PtdIns) via its N-terminal domain. Has NAD(+) hydrolase (NADase) activity, catalyzes cleavage of NAD(+) into ADP-D-ribose (ADPR) and nicotinamide. Also generates a cyclization variant of cyclic ADPR (cADPR), termed v-cADPR (probably 2'cADPR). The polypeptide is Probable 2' cyclic ADP-D-ribose synthase TcpB (Brucella melitensis biotype 1 (strain ATCC 23456 / CCUG 17765 / NCTC 10094 / 16M)).